The sequence spans 158 residues: Small ribosomal subunit protein bS6 (158 aa).

The interval 98–158 (EAPSAPLARR…DRDEDQNEEN (61 aa)) is disordered. Basic and acidic residues-rich tracts occupy residues 106–117 (RRGEDRDRDRGF) and 127–150 (DSGR…RSDR).

The protein belongs to the bacterial ribosomal protein bS6 family.

Binds together with bS18 to 16S ribosomal RNA. The chain is Small ribosomal subunit protein bS6 from Acidiphilium cryptum (strain JF-5).